The chain runs to 277 residues: 2-dehydro-3-deoxyphosphooctonate aldolase (277 aa).

This sequence belongs to the KdsA family.

It is found in the cytoplasm. The catalysed reaction is D-arabinose 5-phosphate + phosphoenolpyruvate + H2O = 3-deoxy-alpha-D-manno-2-octulosonate-8-phosphate + phosphate. The protein operates within carbohydrate biosynthesis; 3-deoxy-D-manno-octulosonate biosynthesis; 3-deoxy-D-manno-octulosonate from D-ribulose 5-phosphate: step 2/3. It participates in bacterial outer membrane biogenesis; lipopolysaccharide biosynthesis. This Brucella melitensis biotype 2 (strain ATCC 23457) protein is 2-dehydro-3-deoxyphosphooctonate aldolase.